We begin with the raw amino-acid sequence, 801 residues long: Mitochondrial intermediate peptidase (801 aa).

Residues 1 to 41 (MKDQLLVPLRRRPWTCQKCLQRLQLPRHQTRRSFETAASPF) constitute a mitochondrion transit peptide. Zn(2+) is bound at residue histidine 564. The active site involves glutamate 565. Zn(2+) is bound by residues histidine 568 and histidine 571.

The protein belongs to the peptidase M3 family. It depends on Zn(2+) as a cofactor.

It localises to the mitochondrion matrix. It catalyses the reaction Release of an N-terminal octapeptide as second stage of processing of some proteins imported into the mitochondrion.. Its function is as follows. Cleaves proteins, imported into the mitochondrion, to their mature size. While most mitochondrial precursor proteins are processed to the mature form in one step by mitochondrial processing peptidase (MPP), the sequential cleavage by MIP of an octapeptide after initial processing by MPP is a required step for a subgroup of nuclear-encoded precursor proteins destined for the matrix or the inner membrane. The polypeptide is Mitochondrial intermediate peptidase (oct1) (Aspergillus fumigatus (strain CBS 144.89 / FGSC A1163 / CEA10) (Neosartorya fumigata)).